Consider the following 710-residue polypeptide: Dual specificity protein kinase shkE (710 aa).

3 stretches are compositionally biased toward low complexity: residues 83 to 94 (DVSDSNNNNSTS), 107 to 129 (NNNN…NNNN), and 197 to 208 (QKQQQSQASIQQ). Disordered stretches follow at residues 83-136 (DVSD…PTVI) and 189-232 (QHLT…IPPE). The region spanning 237–495 (DVKTDLLGGG…EVTQRMNEVL (259 aa)) is the Protein kinase domain. Residues 243–251 (LGGGAYGKV) and lysine 264 contribute to the ATP site. Aspartate 359 functions as the Proton acceptor in the catalytic mechanism. Positions 597–707 (WFHFDISRDI…CPITEIKVPY (111 aa)) constitute an SH2 domain.

It belongs to the protein kinase superfamily. Ser/Thr protein kinase family. SH2 domain-containing protein kinase subfamily.

It localises to the membrane. The catalysed reaction is L-seryl-[protein] + ATP = O-phospho-L-seryl-[protein] + ADP + H(+). It catalyses the reaction L-threonyl-[protein] + ATP = O-phospho-L-threonyl-[protein] + ADP + H(+). Its function is as follows. Required for proper chemotaxis and phagocytosis; proper spatiotemporal control of F-actin levels in chemotaxing cells. Negative regulator of the PI3K (phosphatidylinositol 3 kinase) pathway. Predominantly phosphorylates serines and threonines and tyrosines at a lower level. The chain is Dual specificity protein kinase shkE (shkE) from Dictyostelium discoideum (Social amoeba).